The sequence spans 106 residues: uORF protein (106 aa).

The segment covering 1 to 19 has biased composition (basic and acidic residues); that stretch reads MDLETRVSGHEKPQRRNPE. Positions 1-31 are disordered; that stretch reads MDLETRVSGHEKPQRRNPEDPDCQYAKTRSS.

The protein resides in the host cytoplasm. Its subcellular location is the host cytoskeleton. Its function is as follows. Plays a role in viral replication. This Zika virus (ZIKV) protein is uORF protein.